The sequence spans 238 residues: Purine nucleoside phosphorylase DeoD-type (238 aa).

His4 is an a purine D-ribonucleoside binding site. Phosphate contacts are provided by residues Gly20, Arg24, Arg43, and 87–90 (RIGS). Residues 181-183 (EME) and 205-206 (SD) contribute to the a purine D-ribonucleoside site. Asp206 (proton donor) is an active-site residue.

This sequence belongs to the PNP/UDP phosphorylase family. Homohexamer; trimer of homodimers.

The enzyme catalyses a purine D-ribonucleoside + phosphate = a purine nucleobase + alpha-D-ribose 1-phosphate. It catalyses the reaction a purine 2'-deoxy-D-ribonucleoside + phosphate = a purine nucleobase + 2-deoxy-alpha-D-ribose 1-phosphate. In terms of biological role, catalyzes the reversible phosphorolytic breakdown of the N-glycosidic bond in the beta-(deoxy)ribonucleoside molecules, with the formation of the corresponding free purine bases and pentose-1-phosphate. In Mycoplasma genitalium (strain ATCC 33530 / DSM 19775 / NCTC 10195 / G37) (Mycoplasmoides genitalium), this protein is Purine nucleoside phosphorylase DeoD-type.